Consider the following 592-residue polypeptide: Leucine-rich repeat and immunoglobulin-like domain-containing nogo receptor-interacting protein 3 (592 aa).

A signal peptide spans 1–24 (MTCWLCVLSLPLLLLPAAPPPAGG). One can recognise an LRRNT domain in the interval 25 to 54 (CPARCECTVQTRAVACTRRRLTAVPDGIPA). The Extracellular segment spans residues 25 to 531 (CPARCECTVQ…LDLTTILVST (507 aa)). 11 LRR repeats span residues 55–76 (ETRL…DLAA), 79–100 (ALEE…AFAN), 103–124 (RLRV…VFTR), 127–148 (NLTL…TFQD), 151–172 (SLRR…AFAG), 175–196 (ALEE…SLGH), 207–228 (HLAI…LHLE), 247–268 (NLTS…ALRH), 271–292 (HLTC…SFRD), 295–316 (RLRE…AFLG), and 319–340 (QIRL…TFHS). A glycan (N-linked (GlcNAc...) asparagine) is linked at Asn-127. An N-linked (GlcNAc...) asparagine glycan is attached at Asn-185. N-linked (GlcNAc...) asparagine glycans are attached at residues Asn-247, Asn-257, and Asn-276. Asn-324 carries N-linked (GlcNAc...) asparagine glycosylation. Residues 352–406 (NPLACDCRLLWIVQRRKTLNFDGRLPACATPAEVRGDALRNLPDSVLFEYFVCRK) enclose the LRRCT domain. The Ig-like C2-type domain maps to 407-496 (PKIRERRLQR…GNDTYFATLT (90 aa)). Cys-429 and Cys-480 form a disulfide bridge. Residues Asn-488 and Asn-512 are each glycosylated (N-linked (GlcNAc...) asparagine). The helical transmembrane segment at 532–552 (AMGCITFLGVVLFCFVLLFVW) threads the bilayer. Residues 553–592 (SRGRGQHKNNFSVEYSFRKVDGPAAAAGQGGARKFNMKMI) lie on the Cytoplasmic side of the membrane.

The protein resides in the membrane. The protein is Leucine-rich repeat and immunoglobulin-like domain-containing nogo receptor-interacting protein 3 (LINGO3) of Homo sapiens (Human).